We begin with the raw amino-acid sequence, 754 residues long: MFHSEYEKKLRSPSKSPGSKTNYYNNYSNNNNNTPIPLPLSIFHSTYEDNGSNNNNNNNNNNINLNSNNNNNNSNNSGSNINNNITTPIKSTSTTTTTTTTPITTPTTTTTTTTTTPSYDSYGDRFIPLSIGLESQNNYSFDESSYEYLYCYPSENSYTIDKQRDESHLAYNIVLKNELLGSSLSSNFFDSPSSIYKSSIFNNNNNNNNNNNNNNNNNNNNNNNNHVNNNNNNNNNNNIDTPTNNNNNNNNNNNNNNVNINDTTATTTTTTTTNTNIPTTTTNATNNNNNNSNNTTTTTTTTTNTTNTTNTNTNTNTNNNLININQSPSKKQSLMSATMNNNNSNNNNNNNFGILKYNQKQKSTMSNHLDCSPYSLSLLSDDSQKLLSSPRKPQRKISKTPIKILDAPMIKDDFYLNLIDWSSHNILAVGLDTSVYLWNATTSQVSKLCEMESGQPVSSVGWIQRGGIHLAIGGTDGVVSIWDVNKKKKIRELQGHNTRVNALAWNNHILSSGGKDKVILHHDVRDCSNNYTNRLVGHRHEICGLKWSPDGQQLASGGNDNLLNVWDHSMTQQPQQQHQPPPPPPSSNTSSISQQQQQQNTSKPLYQFKFHYAAVKAIAWSPHQRGLLASGGGTHDKCIRFWNTTTGQSIQSIDTGSQVCNLAWSKNINELVSTHGYSQNQITVWNYPTMTPVTTLTGHTMRVLYLAVSPDGQTVCTGAGDNSLRFWNLFPSNKESSFSSNLDSFYNKKGLDIR.

The segment covering 1-10 (MFHSEYEKKL) has biased composition (basic and acidic residues). Disordered regions lie at residues 1–30 (MFHSEYEKKLRSPSKSPGSKTNYYNNYSNN), 47–116 (YEDN…TTTT), and 200–351 (IFNN…NNNN). 2 stretches are compositionally biased toward low complexity: residues 50 to 116 (NGSN…TTTT) and 202 to 325 (NNNN…ININ). The span at 326–339 (QSPSKKQSLMSATM) shows a compositional bias: polar residues. The segment covering 340 to 351 (NNNNSNNNNNNN) has biased composition (low complexity). WD repeat units follow at residues 411 to 448 (KDDFYLNLIDWSSHNILAVGLDTSVYLWNATTSQVSKL), 452 to 492 (ESGQ…KIRE), 495 to 532 (GHNTRVNALAWNNHILSSGGKDKVILHHDVRDCSNNYT), and 537 to 576 (GHRHEICGLKWSPDGQQLASGGNDNLLNVWDHSMTQQPQQ). Positions 570–598 (MTQQPQQQHQPPPPPPSSNTSSISQQQQQ) are disordered. The segment covering 587–598 (SNTSSISQQQQQ) has biased composition (low complexity). WD repeat units lie at residues 610-652 (FHYA…SIQS), 654-695 (DTGS…PVTT), and 698-737 (GHTMRVLYLAVSPDGQTVCTGAGDNSLRFWNLFPSNKESS).

Belongs to the WD repeat CDC20/Fizzy family. As to quaternary structure, the APC/C is composed of at least 13 subunits that stay tightly associated throughout the cell cycle: anapc1, anapc2, anapc3, anapc4, anapc5, anapc6, anapc7, anapc8, anapc10, anapc11, cdc20, cdc26 and cdh1.

The protein localises to the nucleus. It functions in the pathway protein modification; protein ubiquitination. In terms of biological role, component of the anaphase promoting complex/cyclosome (APC/C), a cell cycle-regulated E3 ubiquitin-protein ligase complex that controls progression through mitosis and the G1 phase of the cell cycle. This chain is Anaphase-promoting complex subunit cdh1 (cdh1), found in Dictyostelium discoideum (Social amoeba).